We begin with the raw amino-acid sequence, 140 residues long: Histone H2A.Z-specific chaperone CHZ1 (140 aa).

Basic and acidic residues-rich tracts occupy residues M1–H28 and N37–Q51. 2 disordered regions span residues M1–L73 and A118–G140. 2 stretches are compositionally biased toward acidic residues: residues S61–K72 and V125–G140.

The protein belongs to the CHZ1 family. As to quaternary structure, forms a heterotrimer with H2A.Z-H2B, stabilizing the association of the histone dimer. Also, with a lower affinity, forms a heterotrimer with H2A-H2B.

It localises to the nucleus. Its function is as follows. Forms a chaperone-bound H2A.Z-H2B complex that acts as a source for SWR1 complex-dependent H2A to H2A.Z histone replacement in chromatin. This is Histone H2A.Z-specific chaperone CHZ1 (CHZ1) from Eremothecium gossypii (strain ATCC 10895 / CBS 109.51 / FGSC 9923 / NRRL Y-1056) (Yeast).